The chain runs to 446 residues: Adenylosuccinate synthetase (446 aa).

GTP is bound by residues 12 to 18 (GDEGKGK) and 40 to 42 (GHT). Asp13 functions as the Proton acceptor in the catalytic mechanism. Residues Asp13 and Gly40 each contribute to the Mg(2+) site. IMP is bound by residues 13–16 (DEGK), 38–41 (NAGH), Thr128, Arg142, Gln223, Thr238, and Arg302. The active-site Proton donor is His41. Residue 298–304 (TTTGRRR) coordinates substrate. GTP contacts are provided by residues Arg304, 330 to 332 (KLD), and 412 to 414 (SLG).

It belongs to the adenylosuccinate synthetase family. As to quaternary structure, homodimer. The cofactor is Mg(2+).

Its subcellular location is the cytoplasm. It carries out the reaction IMP + L-aspartate + GTP = N(6)-(1,2-dicarboxyethyl)-AMP + GDP + phosphate + 2 H(+). Its pathway is purine metabolism; AMP biosynthesis via de novo pathway; AMP from IMP: step 1/2. Functionally, plays an important role in the de novo pathway of purine nucleotide biosynthesis. Catalyzes the first committed step in the biosynthesis of AMP from IMP. The chain is Adenylosuccinate synthetase from Crocosphaera subtropica (strain ATCC 51142 / BH68) (Cyanothece sp. (strain ATCC 51142)).